A 358-amino-acid chain; its full sequence is MKVGVALSGGVDSAVALYLLLKEGHEVKAFHMKTKEDEFFLKKEIKKKVCCSPSDTADAIRIARSLGVEIEIVDVREVFREKVIEPFKRDLLRGLTPNPCVHCNRYVKFGYFMDYVLSQGFDAFASGHYARVEFSGKYGKKVIKKGVDGKKDQSYFLARIEPWRIEKLLFPNGIYTKEEIRRIAEEAGIHVAKKQESQDVCFIPDGSIENFLKDEGITLSEGKVITEKGEVVGHHRGYPLYTVGQRKGLKIEKFGERLYVREKIPESNVVVVSGLEGVFFSGLIAVDPVWHVDLPEEFRCVCRVRKKAEEAPAIVRVKNSEVEVRFEKKIFAVTPGQIAAFYDEDTLLGGAIIKEGIP.

ATP contacts are provided by residues 6–13 (ALSGGVDS) and M32. The active-site Nucleophile is the C103. An intrachain disulfide couples C103 to C201. G127 provides a ligand contact to ATP. Positions 151-153 (KDQ) are interaction with tRNA. The active-site Cysteine persulfide intermediate is C201.

The protein belongs to the MnmA/TRMU family.

The protein resides in the cytoplasm. It carries out the reaction S-sulfanyl-L-cysteinyl-[protein] + uridine(34) in tRNA + AH2 + ATP = 2-thiouridine(34) in tRNA + L-cysteinyl-[protein] + A + AMP + diphosphate + H(+). Its function is as follows. Catalyzes the 2-thiolation of uridine at the wobble position (U34) of tRNA, leading to the formation of s(2)U34. The sequence is that of tRNA-specific 2-thiouridylase MnmA from Thermotoga neapolitana (strain ATCC 49049 / DSM 4359 / NBRC 107923 / NS-E).